Here is a 639-residue protein sequence, read N- to C-terminus: ATP-dependent rRNA helicase spb4 (639 aa).

Positions Trp14–Ala42 match the Q motif motif. One can recognise a Helicase ATP-binding domain in the interval Ile45 to Ile249. Residue Ala58–Thr65 coordinates ATP. Positions Asp197–Asp200 match the DEAD box motif. The 155-residue stretch at Ala283–Thr437 folds into the Helicase C-terminal domain. Disordered regions lie at residues Arg531–Glu601 and Ala620–Asp639. Residues Gln561–Glu624 are a coiled coil. Over residues Lys577–Glu601 the composition is skewed to basic and acidic residues.

It belongs to the DEAD box helicase family. DDX55/SPB4 subfamily. Component of pre-60S ribosomal complexes.

The protein localises to the nucleus. The protein resides in the nucleolus. It carries out the reaction ATP + H2O = ADP + phosphate + H(+). In terms of biological role, ATP-binding RNA helicase involved in the biogenesis of 60S ribosomal subunits. Binds 90S pre-ribosomal particles and dissociates from pre-60S ribosomal particles after processing of 27SB pre-rRNA. Required for the normal formation of 18S rRNA through the processing of pre-rRNAs at sites A0, A1 and A2, and the normal formation of 25S and 5.8S rRNAs through the processing of pre-rRNAs at sites C1 and C2. This Aspergillus clavatus (strain ATCC 1007 / CBS 513.65 / DSM 816 / NCTC 3887 / NRRL 1 / QM 1276 / 107) protein is ATP-dependent rRNA helicase spb4.